Reading from the N-terminus, the 131-residue chain is Translation initiation factor 5A (131 aa).

Residue lysine 37 is modified to Hypusine.

This sequence belongs to the eIF-5A family.

It localises to the cytoplasm. In terms of biological role, functions by promoting the formation of the first peptide bond. The polypeptide is Translation initiation factor 5A (eIF5A) (Methanococcus maripaludis (strain C7 / ATCC BAA-1331)).